The sequence spans 872 residues: DNA mismatch repair protein MutS (872 aa).

An ATP-binding site is contributed by 623-630 (GPNMAGKS).

Belongs to the DNA mismatch repair MutS family.

Its function is as follows. This protein is involved in the repair of mismatches in DNA. It is possible that it carries out the mismatch recognition step. This protein has a weak ATPase activity. The protein is DNA mismatch repair protein MutS of Trichlorobacter lovleyi (strain ATCC BAA-1151 / DSM 17278 / SZ) (Geobacter lovleyi).